Reading from the N-terminus, the 195-residue chain is Rac-like GTP-binding protein ARAC4 (195 aa).

GTP-binding positions include 12-19 (GDGAVGKT), 30-37 (FPTDYVPT), 59-63 (DTAGQ), and 117-120 (TKLD). The Effector region signature appears at 34–42 (YVPTVFDNF). Residue cysteine 192 is modified to Cysteine methyl ester. A lipid anchor (S-geranylgeranyl cysteine) is attached at cysteine 192. Residues 193-195 (AFL) constitute a propeptide, removed in mature form.

It belongs to the small GTPase superfamily. Rho family. In terms of assembly, interacts with SPK1, ICR1, ICR5 and PIR. Ubiquitous.

It is found in the cytoplasm. The protein localises to the cell membrane. Its function is as follows. Inactive GDP-bound Rho GTPases reside in the cytosol, are found in a complex with Rho GDP-dissociation inhibitors (Rho GDIs), and are released from the GDI protein in order to translocate to membranes upon activation. Involved in cell polarity control during the actin-dependent tip growth of root hairs, thus regulating root hair length and root hair initiation. Contributes, in a SPK1-dependent manner, to the prevention of cortical microtubules organization into parallel arrays oriented perpendicular to the axis of cell elongation to limit anisotropic cell growth during petal development. May regulate a WAVE complex that activates the Arp2/3 complex. The polypeptide is Rac-like GTP-binding protein ARAC4 (Arabidopsis thaliana (Mouse-ear cress)).